The following is an 86-amino-acid chain: Neurotoxin-like protein NTL2 (86 aa).

An N-terminal signal peptide occupies residues 1-21; it reads MKTLLLSLVVVTIVCLDLGYT. Disulfide bonds link cysteine 24-cysteine 45, cysteine 38-cysteine 63, cysteine 67-cysteine 78, and cysteine 79-cysteine 84.

The protein belongs to the three-finger toxin family. Short-chain subfamily. Orphan group I sub-subfamily. As to expression, expressed by the venom gland.

Its subcellular location is the secreted. This chain is Neurotoxin-like protein NTL2, found in Naja atra (Chinese cobra).